We begin with the raw amino-acid sequence, 236 residues long: Protein-L-isoaspartate O-methyltransferase 1 (236 aa).

S85 is a catalytic residue.

The protein belongs to the methyltransferase superfamily. L-isoaspartyl/D-aspartyl protein methyltransferase family.

It is found in the cytoplasm. The catalysed reaction is [protein]-L-isoaspartate + S-adenosyl-L-methionine = [protein]-L-isoaspartate alpha-methyl ester + S-adenosyl-L-homocysteine. Its function is as follows. Catalyzes the methyl esterification of L-isoaspartyl residues in peptides and proteins that result from spontaneous decomposition of normal L-aspartyl and L-asparaginyl residues. It plays a role in the repair and/or degradation of damaged proteins. This chain is Protein-L-isoaspartate O-methyltransferase 1, found in Polaromonas sp. (strain JS666 / ATCC BAA-500).